The primary structure comprises 574 residues: Proline--tRNA ligase (574 aa).

It belongs to the class-II aminoacyl-tRNA synthetase family. ProS type 1 subfamily. In terms of assembly, homodimer.

The protein resides in the cytoplasm. The catalysed reaction is tRNA(Pro) + L-proline + ATP = L-prolyl-tRNA(Pro) + AMP + diphosphate. Functionally, catalyzes the attachment of proline to tRNA(Pro) in a two-step reaction: proline is first activated by ATP to form Pro-AMP and then transferred to the acceptor end of tRNA(Pro). As ProRS can inadvertently accommodate and process non-cognate amino acids such as alanine and cysteine, to avoid such errors it has two additional distinct editing activities against alanine. One activity is designated as 'pretransfer' editing and involves the tRNA(Pro)-independent hydrolysis of activated Ala-AMP. The other activity is designated 'posttransfer' editing and involves deacylation of mischarged Ala-tRNA(Pro). The misacylated Cys-tRNA(Pro) is not edited by ProRS. The sequence is that of Proline--tRNA ligase from Thioalkalivibrio sulfidiphilus (strain HL-EbGR7).